The following is a 387-amino-acid chain: Putative ribosomal RNA large subunit methyltransferase MJ1649 (387 aa).

One can recognise a PUA domain in the interval 5–81 (LIKLEIDRRA…EEIDYDFFYK (77 aa)).

It belongs to the methyltransferase superfamily. RlmI family.

The protein resides in the cytoplasm. The protein is Putative ribosomal RNA large subunit methyltransferase MJ1649 of Methanocaldococcus jannaschii (strain ATCC 43067 / DSM 2661 / JAL-1 / JCM 10045 / NBRC 100440) (Methanococcus jannaschii).